Here is a 271-residue protein sequence, read N- to C-terminus: Type III pantothenate kinase (271 aa).

6–13 contributes to the ATP binding site; sequence DVRNTHTV. Position 109–112 (109–112) interacts with substrate; that stretch reads GADR. The Proton acceptor role is filled by D111. D131 provides a ligand contact to K(+). S134 serves as a coordination point for ATP. Position 186 (T186) interacts with substrate.

This sequence belongs to the type III pantothenate kinase family. As to quaternary structure, homodimer. It depends on NH4(+) as a cofactor. Requires K(+) as cofactor.

It localises to the cytoplasm. It catalyses the reaction (R)-pantothenate + ATP = (R)-4'-phosphopantothenate + ADP + H(+). The protein operates within cofactor biosynthesis; coenzyme A biosynthesis; CoA from (R)-pantothenate: step 1/5. Catalyzes the phosphorylation of pantothenate (Pan), the first step in CoA biosynthesis. This is Type III pantothenate kinase from Mycolicibacterium smegmatis (strain ATCC 700084 / mc(2)155) (Mycobacterium smegmatis).